We begin with the raw amino-acid sequence, 877 residues long: Clumping factor B (877 aa).

An N-terminal signal peptide occupies residues 1-44 (MKKRIDYLSNKQNKYSIRRFTVGTTSVIVGATILFGIGNHQAQA). The short motif at 15–26 (YSIRRFTVGTTS) is the YSIRK-G/S signaling motif element. 2 stretches are compositionally biased toward polar residues: residues 44 to 61 (ASEQ…NASA) and 68 to 95 (MIET…NVDS). A disordered region spans residues 44 to 192 (ASEQSNDTTQ…QGTSKPSVRT (149 aa)). The tract at residues 45–542 (SEQSNDTTQS…GSADGDSAVN (498 aa)) is ligand binding A region. Residues 96-119 (TTKPMSTQTSNTTTTEPASTNETP) show a composition bias toward low complexity. Residues 120–189 (QPTAIKNQAT…SNAQGTSKPS (70 aa)) show a composition bias toward polar residues. The short motif at 272-276 (DYSNS) is the MIDAS-like motif element. Residues 530–849 (YGGGSADGDS…ETGDKSENTN (320 aa)) are disordered. Pro residues predominate over residues 545–555 (DPTPGPPVDPE). Acidic residues predominate over residues 556–801 (PSPDPEPEPT…SDSDSDSDSD (246 aa)). Positions 805–816 (RVTPPNNEQKAP) are enriched in polar residues. A compositionally biased stretch (basic and acidic residues) spans 833–846 (HKTDALPETGDKSE). Positions 838 to 842 (LPETG) match the LPXTG sorting signal motif. Thr841 carries the pentaglycyl murein peptidoglycan amidated threonine modification. Positions 842 to 877 (GDKSENTNATLFGAMMALLGSLLLFRKRKQDHKEKA) are cleaved as a propeptide — removed by sortase.

Belongs to the serine-aspartate repeat-containing protein (SDr) family. Proteolytically cleaved by aureolysin (aur). This cleavage leads to the inactivation of ClfB.

It is found in the secreted. It localises to the cell wall. Functionally, cell surface-associated protein implicated in virulence by promoting bacterial attachment to both alpha- and beta-chains of human fibrinogen and inducing the formation of bacterial clumps. The protein is Clumping factor B (clfB) of Staphylococcus aureus (strain Mu50 / ATCC 700699).